A 99-amino-acid chain; its full sequence is Co-chaperonin GroES (99 aa).

The protein belongs to the GroES chaperonin family. As to quaternary structure, heptamer of 7 subunits arranged in a ring. Interacts with the chaperonin GroEL.

The protein resides in the cytoplasm. Functionally, together with the chaperonin GroEL, plays an essential role in assisting protein folding. The GroEL-GroES system forms a nano-cage that allows encapsulation of the non-native substrate proteins and provides a physical environment optimized to promote and accelerate protein folding. GroES binds to the apical surface of the GroEL ring, thereby capping the opening of the GroEL channel. This Methylacidiphilum infernorum (isolate V4) (Methylokorus infernorum (strain V4)) protein is Co-chaperonin GroES.